The sequence spans 439 residues: GTPase Der (439 aa).

2 EngA-type G domains span residues 2–167 and 182–358; these read PTVL…ESKG and IRVS…KSLH. GTP is bound by residues 8 to 15, 55 to 59, 118 to 121, 188 to 195, 235 to 239, and 301 to 304; these read GKSNVGKS, DTGGI, NKSE, GRPNAGKS, DTAGL, and NKID. One can recognise a KH-like domain in the interval 359-439; it reads YRVQTSAVNS…PIFLKFKSRH (81 aa).

The protein belongs to the TRAFAC class TrmE-Era-EngA-EngB-Septin-like GTPase superfamily. EngA (Der) GTPase family. Associates with the 50S ribosomal subunit.

In terms of biological role, GTPase that plays an essential role in the late steps of ribosome biogenesis. This is GTPase Der from Thermosipho africanus (strain TCF52B).